The chain runs to 299 residues: Porphobilinogen deaminase (299 aa).

Cysteine 242 carries the post-translational modification S-(dipyrrolylmethanemethyl)cysteine.

Belongs to the HMBS family. In terms of assembly, monomer. Dipyrromethane serves as cofactor.

The catalysed reaction is 4 porphobilinogen + H2O = hydroxymethylbilane + 4 NH4(+). Its pathway is porphyrin-containing compound metabolism; protoporphyrin-IX biosynthesis; coproporphyrinogen-III from 5-aminolevulinate: step 2/4. Its function is as follows. Tetrapolymerization of the monopyrrole PBG into the hydroxymethylbilane pre-uroporphyrinogen in several discrete steps. The polypeptide is Porphobilinogen deaminase (hemC) (Rickettsia prowazekii (strain Madrid E)).